A 417-amino-acid chain; its full sequence is Serine--tRNA ligase (417 aa).

Position 232–234 (232–234) interacts with L-serine; that stretch reads TAE. Residue 263-265 coordinates ATP; the sequence is RKE. Glu-286 lines the L-serine pocket. 350–353 is a binding site for ATP; sequence EISS. Residue Ser-385 participates in L-serine binding.

The protein belongs to the class-II aminoacyl-tRNA synthetase family. Type-1 seryl-tRNA synthetase subfamily. As to quaternary structure, homodimer. The tRNA molecule binds across the dimer.

Its subcellular location is the cytoplasm. It carries out the reaction tRNA(Ser) + L-serine + ATP = L-seryl-tRNA(Ser) + AMP + diphosphate + H(+). It catalyses the reaction tRNA(Sec) + L-serine + ATP = L-seryl-tRNA(Sec) + AMP + diphosphate + H(+). The protein operates within aminoacyl-tRNA biosynthesis; selenocysteinyl-tRNA(Sec) biosynthesis; L-seryl-tRNA(Sec) from L-serine and tRNA(Sec): step 1/1. In terms of biological role, catalyzes the attachment of serine to tRNA(Ser). Is also able to aminoacylate tRNA(Sec) with serine, to form the misacylated tRNA L-seryl-tRNA(Sec), which will be further converted into selenocysteinyl-tRNA(Sec). This Sulfurihydrogenibium sp. (strain YO3AOP1) protein is Serine--tRNA ligase.